The primary structure comprises 289 residues: Acetyl-coenzyme A carboxylase carboxyl transferase subunit beta (289 aa).

The CoA carboxyltransferase N-terminal domain maps to 24–289 (LWIKCPESGE…NSPRRAPIPA (266 aa)).

The protein belongs to the AccD/PCCB family. As to quaternary structure, acetyl-CoA carboxylase is a heterohexamer composed of biotin carboxyl carrier protein (AccB), biotin carboxylase (AccC) and two subunits each of ACCase subunit alpha (AccA) and ACCase subunit beta (AccD).

The protein resides in the cytoplasm. The enzyme catalyses N(6)-carboxybiotinyl-L-lysyl-[protein] + acetyl-CoA = N(6)-biotinyl-L-lysyl-[protein] + malonyl-CoA. Its pathway is lipid metabolism; malonyl-CoA biosynthesis; malonyl-CoA from acetyl-CoA: step 1/1. In terms of biological role, component of the acetyl coenzyme A carboxylase (ACC) complex. Biotin carboxylase (BC) catalyzes the carboxylation of biotin on its carrier protein (BCCP) and then the CO(2) group is transferred by the transcarboxylase to acetyl-CoA to form malonyl-CoA. This Beijerinckia indica subsp. indica (strain ATCC 9039 / DSM 1715 / NCIMB 8712) protein is Acetyl-coenzyme A carboxylase carboxyl transferase subunit beta.